A 230-amino-acid polypeptide reads, in one-letter code: MADLKITWLGHAAFLLESEKKLLIDPFISENPKSPCSPEDLNPDIIAVTHGHRDHLGDTIEIGARTGCRIISIHEVANYIKSKGVFAEGMNKGGTVEVEGIALTMTHALHSSSIDASGFSFDGGSPAGFVINIGGYSVYHSGDTGVFGDMQLIGELYKPEIALLPIGSRFTMGIKEAVKAVELIEPRIVVPMHYNTFDVIRQDPEEFRKAVEAKVDTKVIIMSPGESIQL.

The protein belongs to the UPF0173 family.

This Methanosarcina mazei (strain ATCC BAA-159 / DSM 3647 / Goe1 / Go1 / JCM 11833 / OCM 88) (Methanosarcina frisia) protein is UPF0173 metal-dependent hydrolase MM_2300.